The chain runs to 96 residues: Molybdopterin synthase sulfur carrier subunit (96 aa).

Gly96 carries the post-translational modification 1-thioglycine; alternate. Gly96 is modified (glycyl adenylate; alternate).

Belongs to the MoaD family. MOCS2A subfamily. Heterotetramer; composed of 2 small (MOCS2A) and 2 large (MOCS2B) subunits. In terms of processing, C-terminal thiocarboxylation occurs in 2 steps, it is first acyl-adenylated (-COAMP) via the hesA/moeB/thiF part of UBA4, then thiocarboxylated (-COSH) via the rhodanese domain of UBA4.

The protein localises to the cytoplasm. It participates in cofactor biosynthesis; molybdopterin biosynthesis. Functionally, acts as a sulfur carrier required for molybdopterin biosynthesis. Component of the molybdopterin synthase complex that catalyzes the conversion of precursor Z into molybdopterin by mediating the incorporation of 2 sulfur atoms into precursor Z to generate a dithiolene group. In the complex, serves as sulfur donor by being thiocarboxylated (-COSH) at its C-terminus by UBA4. After interaction with MOCS2B, the sulfur is then transferred to precursor Z to form molybdopterin. The protein is Molybdopterin synthase sulfur carrier subunit of Phaeosphaeria nodorum (strain SN15 / ATCC MYA-4574 / FGSC 10173) (Glume blotch fungus).